The primary structure comprises 282 residues: Parvulin-like PPIase (282 aa).

Positions 1-20 are cleaved as a signal peptide; the sequence is MKKLSVIFLSVSMLSSIAFG. The PpiC domain maps to 138-231; the sequence is KEQIKVAHIL…FGWHIIKVLE (94 aa).

The protein belongs to the PpiC/parvulin rotamase family.

It is found in the cell outer membrane. It catalyses the reaction [protein]-peptidylproline (omega=180) = [protein]-peptidylproline (omega=0). The polypeptide is Parvulin-like PPIase (plp) (Rickettsia prowazekii (strain Madrid E)).